The primary structure comprises 110 residues: Methionine-R-sulfoxide reductase B1-A (110 aa).

The MsrB domain maps to 1-104 (MSFCSFSGGE…FSSSLKFIPK (104 aa)). Cys-23, Cys-26, Cys-69, and Cys-72 together coordinate Zn(2+). Sec-93 functions as the Nucleophile in the catalytic mechanism. Sec-93 is a non-standard amino acid (selenocysteine).

Belongs to the MsrB Met sulfoxide reductase family. Zn(2+) is required as a cofactor. In terms of tissue distribution, in the embryo, expressed in the polster, paraxial mesoderm, tectum, otic vesicle and liver.

It localises to the cytoplasm. It is found in the nucleus. The protein localises to the cytoskeleton. It catalyses the reaction L-methionyl-[protein] + [thioredoxin]-disulfide + H2O = L-methionyl-(R)-S-oxide-[protein] + [thioredoxin]-dithiol. It carries out the reaction [thioredoxin]-disulfide + L-methionine + H2O = L-methionine (R)-S-oxide + [thioredoxin]-dithiol. In terms of biological role, methionine-sulfoxide reductase that specifically reduces methionine (R)-sulfoxide back to methionine. While in many cases, methionine oxidation is the result of random oxidation following oxidative stress, methionine oxidation is also a post-translational modification that takes place on specific residue. Acts as a regulator of actin assembly by reducing methionine (R)-sulfoxide mediated by MICALs (mical1, mical2 or mical3) on actin, thereby promoting filament repolymerization. Plays a role in innate immunity by reducing oxidized actin, leading to actin repolymerization in macrophages. The chain is Methionine-R-sulfoxide reductase B1-A (msrb1) from Danio rerio (Zebrafish).